We begin with the raw amino-acid sequence, 226 residues long: 3-dehydroquinate dehydratase (226 aa).

3-dehydroquinate-binding positions include 29-31 (EFR) and R56. The active-site Proton donor/acceptor is H120. K146 serves as the catalytic Schiff-base intermediate with substrate. 3 residues coordinate 3-dehydroquinate: R187, T208, and Q212.

This sequence belongs to the type-I 3-dehydroquinase family. Homodimer.

It catalyses the reaction 3-dehydroquinate = 3-dehydroshikimate + H2O. It functions in the pathway metabolic intermediate biosynthesis; chorismate biosynthesis; chorismate from D-erythrose 4-phosphate and phosphoenolpyruvate: step 3/7. Its function is as follows. Involved in the third step of the chorismate pathway, which leads to the biosynthesis of aromatic amino acids. Catalyzes the cis-dehydration of 3-dehydroquinate (DHQ) and introduces the first double bond of the aromatic ring to yield 3-dehydroshikimate. The sequence is that of 3-dehydroquinate dehydratase from Halobacterium salinarum (strain ATCC 700922 / JCM 11081 / NRC-1) (Halobacterium halobium).